We begin with the raw amino-acid sequence, 65 residues long: uncharacterized protein (65 aa).

Its subcellular location is the plastid. The protein resides in the chloroplast. This is an uncharacterized protein from Porphyra purpurea (Red seaweed).